The primary structure comprises 164 residues: UPF0114 protein Sbal223_3668 (164 aa).

4 consecutive transmembrane segments (helical) span residues 15-35 (IMAPIYLGLSLVLIGLGIKFF), 53-73 (LVLVTLSLIDITLVGGLIVMV), 108-128 (KVAASIVAISSIHLLKIFMDV), and 136-156 (IMWYLLIHITFVLSAFAMGYL).

It belongs to the UPF0114 family.

The protein resides in the cell membrane. The sequence is that of UPF0114 protein Sbal223_3668 from Shewanella baltica (strain OS223).